The primary structure comprises 430 residues: MLDPNLLRNELDAVAVKLARRGFKLDLDLLRSQEERRKVLQVETETLQAERNSRSKSIGAAKARGEDIEPLRREVNELGDKLDTAKAALDQLQAEIRDYALAIPNLPDDEVPDGKDDSDNLEVSRWGEPRQYDFAVRDHVDLGEMAGGLDFAAAVKLTGSRFVVMKGQIARMHRALSQFMLDLHTEQHGYQETYVPYLVNHATLFGTGQLPKFGEDLFHTKPLEEESDSSNYALIPTAEVPLTNLVRDEILEEESLPLKMTAHTPCFRAEAGSYGRDTRGLIRMHQFDKVEMVQIVRPEDSMTTLEELTGHAEKVLQLLNLPYRKMLLCTGDMGAGSCKTYDLEVWLPAQDTYREISSCSNMWDYQARRMQARCRSKTEKKPRLVHTLNGSGLAVGRTLVAVLENYQQADGRIQVPEVLRPYMGGLEYIG.

237-239 lines the L-serine pocket; sequence TAE. Residue 268–270 coordinates ATP; the sequence is RAE. Glu291 is an L-serine binding site. 355 to 358 is a binding site for ATP; it reads EISS. Ser391 lines the L-serine pocket.

This sequence belongs to the class-II aminoacyl-tRNA synthetase family. Type-1 seryl-tRNA synthetase subfamily. As to quaternary structure, homodimer. The tRNA molecule binds across the dimer.

It localises to the cytoplasm. The catalysed reaction is tRNA(Ser) + L-serine + ATP = L-seryl-tRNA(Ser) + AMP + diphosphate + H(+). It catalyses the reaction tRNA(Sec) + L-serine + ATP = L-seryl-tRNA(Sec) + AMP + diphosphate + H(+). The protein operates within aminoacyl-tRNA biosynthesis; selenocysteinyl-tRNA(Sec) biosynthesis; L-seryl-tRNA(Sec) from L-serine and tRNA(Sec): step 1/1. Functionally, catalyzes the attachment of serine to tRNA(Ser). Is also able to aminoacylate tRNA(Sec) with serine, to form the misacylated tRNA L-seryl-tRNA(Sec), which will be further converted into selenocysteinyl-tRNA(Sec). This chain is Serine--tRNA ligase, found in Serratia proteamaculans (strain 568).